The sequence spans 298 residues: Mitochondrial intermembrane space import and assembly protein 40 (298 aa).

Residues 1-33 constitute a mitochondrion transit peptide; sequence MYRTALRPSQSALRAIRSTTSPSALVSSGARRF. Residues 34–52 are Mitochondrial matrix-facing; that stretch reads ASTTSAPKKKSTWKGAAVR. Residues 53 to 69 form a helical; Signal-anchor for type II membrane protein membrane-spanning segment; that stretch reads WGLAVAAVYYYNTSPIF. Residues 70 to 298 lie on the Mitochondrial intermembrane side of the membrane; that stretch reads SDELPETAGT…TAANNNKKQQ (229 aa). Residues 101-159 are disordered; sequence RQAAEHAAARKAAQAAAKAAATPATPSESVEEQITKAEAEAEAVPEGDSKPRSESTEGV. Low complexity predominate over residues 110 to 121; that stretch reads RKAAQAAAKAAA. Cystine bridges form between Cys-191–Cys-193, Cys-202–Cys-235, and Cys-212–Cys-225. Residues 199–243 enclose the CHCH domain; that stretch reads HGPCGEEFKAAFSCFVYSTEEPKGMDCIEKFSHMQDCFRKYPEVY. 2 short sequence motifs (cx9C motif) span residues 202–212 and 225–235; these read CGEEFKAAFSC and CIEKFSHMQDC. The disordered stretch occupies residues 248–298; the sequence is ADDEEAERASAAAPAAEGTPAKEEPVENKKEEALEPATHDATAANNNKKQQ. Positions 256–266 are enriched in low complexity; sequence ASAAAPAAEGT. Over residues 267-280 the composition is skewed to basic and acidic residues; that stretch reads PAKEEPVENKKEEA.

As to quaternary structure, monomer. Cu(2+) is required as a cofactor. The cofactor is Zn(2+).

It localises to the mitochondrion inner membrane. Its function is as follows. Required for the import and folding of small cysteine-containing proteins (small Tim) in the mitochondrial intermembrane space (IMS). Forms a redox cycle with ERV1 that involves a disulfide relay system. Precursor proteins to be imported into the IMS are translocated in their reduced form into the mitochondria. The oxidized form of MIA40 forms a transient intermolecular disulfide bridge with the reduced precursor protein, resulting in oxidation of the precursor protein that now contains an intramolecular disulfide bond and is able to undergo folding in the IMS. This chain is Mitochondrial intermembrane space import and assembly protein 40 (mia-40), found in Neurospora crassa (strain ATCC 24698 / 74-OR23-1A / CBS 708.71 / DSM 1257 / FGSC 987).